The primary structure comprises 496 residues: N-acetylmuramoyl-L-alanine amidase LytC (496 aa).

A signal peptide spans 1 to 24 (MRSYIKVLTMCFLGLILFVPTALA). Tandem repeats lie at residues 30–128 (RVGG…ISIK), 129–222 (RIAG…PSPT), and 223–318 (RISG…NPVV). Residues 30 to 318 (RVGGSNRYGT…VANQLKNPVV (289 aa)) are 3 X tandem repeats. The region spanning 322–490 (IFIDPGHGDQ…DKAAQAIHDG (169 aa)) is the MurNAc-LAA domain.

Belongs to the N-acetylmuramoyl-L-alanine amidase 3 family.

It localises to the secreted. The protein resides in the cell wall. The enzyme catalyses Hydrolyzes the link between N-acetylmuramoyl residues and L-amino acid residues in certain cell-wall glycopeptides.. Its function is as follows. Autolysins are cell wall hydrolases involved in some important biological processes such as cell separation, cell-wall turnover, competence for genetic transformation, formation of the flagella - in particular of its basal body - and sporulation. Has a high affinity for teichoic acid-endowed peptidoglycan. LytC is required for efficient swarming motility but not at the level of cell separation or flagellum biosynthesis. Rather, LytC appears to be important for proper flagellar function. The protein is N-acetylmuramoyl-L-alanine amidase LytC (lytC) of Bacillus subtilis (strain 168).